The primary structure comprises 90 residues: MSSGGLLLLLGLLTLWAELTPVSGKNRPEFCNLPADTGPCKAYEPRFYYDSVSKECQKFTYGGCKGNSNNFESMDECRKTCVASATRRPT.

Positions 1-24 are cleaved as a signal peptide; sequence MSSGGLLLLLGLLTLWAELTPVSG. Positions 31-81 constitute a BPTI/Kunitz inhibitor domain; it reads CNLPADTGPCKAYEPRFYYDSVSKECQKFTYGGCKGNSNNFESMDECRKTC. Cystine bridges form between C31–C81, C40–C64, and C56–C77.

This sequence belongs to the venom Kunitz-type family. As to expression, expressed by the venom gland.

It is found in the secreted. In terms of biological role, serine protease inhibitor. In Bitis gabonica (Gaboon adder), this protein is Kunitz-type serine protease inhibitor bitisilin-1.